The chain runs to 382 residues: MNLKEKTRALFAEVFGYPATHTIQAPGRVNLIGEHTDYNDGFVLPCAIDYQTVISCAPRDDRTVRVIAADYDNQVDEFSLDAPIVTHDSQQWSNYVRGVVKHLQQRNNAFGGVDMVISGNVPQGAGLSSSASLEVAVGTVFQQLYHLPLDGAQIALNGQEAENQFVGCNCGIMDQLISALGKKDHALLIDCRSLGTKAVSMPKGVAVVIINSNFKRTLVGSEYNTRREQCETGARFFQQPALRDVSLEAFNAVACELDPVVAKRVRHVLSENARTVEAASALEKGDLQRMGQLMAESHASMRDDFEITVPQIDTLVEIVKATIGDKGGVRMTGGGFGGCIVALIPEDLVPAVQQAVAQQYEAKTGIKETFYVCKPSQGAGQC.

Residue 34–37 (EHTD) participates in substrate binding. An ATP-binding site is contributed by 124–130 (GAGLSSS). Positions 130 and 162 each coordinate Mg(2+). The active-site Proton acceptor is Asp-174. Tyr-223 lines the substrate pocket.

The protein belongs to the GHMP kinase family. GalK subfamily.

It localises to the cytoplasm. It catalyses the reaction alpha-D-galactose + ATP = alpha-D-galactose 1-phosphate + ADP + H(+). It participates in carbohydrate metabolism; galactose metabolism. Its function is as follows. Catalyzes the transfer of the gamma-phosphate of ATP to D-galactose to form alpha-D-galactose-1-phosphate (Gal-1-P). This is Galactokinase from Salmonella arizonae (strain ATCC BAA-731 / CDC346-86 / RSK2980).